Here is a 269-residue protein sequence, read N- to C-terminus: Short-chain dehydrogenase/reductase ABA4 (269 aa).

NADP(+)-binding residues include isoleucine 34, aspartate 80, arginine 144, tyrosine 174, lysine 178, isoleucine 207, and threonine 209. Tyrosine 174 acts as the Proton donor in catalysis. Lysine 178 acts as the Lowers pKa of active site Tyr in catalysis.

It belongs to the short-chain dehydrogenases/reductases (SDR) family.

It functions in the pathway hormone biosynthesis. Functionally, short-chain dehydrogenase/reductase involved in the biosynthesis of abscisic acid (ABA), a phytohormone that acts antagonistically toward salicylic acid (SA), jasmonic acid (JA) and ethylene (ETH) signaling, to impede plant defense responses. During pathogen-host interaction, ABA plays a dual role in disease severity by increasing plant susceptibility and accelerating pathogenesis in the fungus itself. The first step of the pathway catalyzes the reaction from farnesyl diphosphate to alpha-ionylideneethane performed by the alpha-ionylideneethane synthase ABA3 via a three-step reaction mechanism involving 2 neutral intermediates, beta-farnesene and allofarnesene. The cytochrome P450 monooxygenase ABA1 might then be involved in the conversion of alpha-ionylideneethane to alpha-ionylideneacetic acid. Alpha-ionylideneacetic acid is further converted to abscisic acid in 2 steps involving the cytochrome P450 monooxygenase ABA2 and the short-chain dehydrogenase/reductase ABA4, via the intermediates 1'-deoxy-ABA or 1',4'-trans-diol-ABA, depending on the order of action of these 2 enzymes. ABA2 is responsible for the hydroxylation of carbon atom C-1' and ABA4 might be involved in the oxidation of the C-4' carbon atom. In Pyricularia oryzae (strain Y34) (Rice blast fungus), this protein is Short-chain dehydrogenase/reductase ABA4 (ABA4).